The primary structure comprises 396 residues: Zinc metalloproteinase nas-19 (396 aa).

The N-terminal stretch at 1-20 is a signal peptide; the sequence is MVRLIHLIGAIILLFSYAYC. In terms of domain architecture, Peptidase M12A spans 38 to 231; sequence RVKRQFERLG…YKINQYYGCW (194 aa). N79 is a glycosylation site (N-linked (GlcNAc...) asparagine). 4 disulfide bridges follow: C82/C230, C105/C130, C232/C252, and C254/C263. H138 provides a ligand contact to Zn(2+). Residue E139 is part of the active site. Positions 142 and 148 each coordinate Zn(2+). The region spanning 225 to 264 is the EGF-like domain; that stretch reads NQYYGCWCSKQLECKNGGYTSPSDCSRCNCPKGFFGNLCD. N310 is a glycosylation site (N-linked (GlcNAc...) asparagine).

Zn(2+) is required as a cofactor.

It is found in the secreted. Metalloprotease. The polypeptide is Zinc metalloproteinase nas-19 (nas-19) (Caenorhabditis elegans).